Here is a 239-residue protein sequence, read N- to C-terminus: Protein-S-isoprenylcysteine O-methyltransferase (239 aa).

Over 1–23 (MHQDFQEDEHEYPDIRRNPLHEV) the chain is Cytoplasmic. Residues 24–44 (TMTSYILGILLGIFVGLFPQI) form a helical membrane-spanning segment. The Lumenal portion of the chain corresponds to 45–47 (RFK). The helical transmembrane segment at 48–68 (NFNLFIIALSLFHFLEYYITA) threads the bilayer. At 69-88 (KYNPLKVHSESFLLNNGKSY) the chain is on the cytoplasmic side. The chain crosses the membrane as a helical span at residues 89–109 (MAAHSFAILECLVESFLFPDL). A topological domain (lumenal) is located at residue K110. The helical transmembrane segment at 111–131 (IFSYSLATKLCTVLGCLLVIL) threads the bilayer. At 132–175 (GQYTRTIAMHTAGHSFSHIVKTKKESDHVLVKTGVYSWSRHPSY) the chain is on the cytoplasmic side. S-adenosyl-L-methionine contacts are provided by residues 159 to 162 (HVLV), Y167, and 172 to 175 (HPSY). An intramembrane region (helical) is located at residues 176-206 (LGFFWWAIGTQLLLLNPLSLVIFIFVLWKFF). Residues 207–239 (SDRIRVEEKYLIEFFSAEYIEYKNKVGVGIPFI) lie on the Cytoplasmic side of the membrane. R209 is a substrate binding site. E213 contacts S-adenosyl-L-methionine.

It belongs to the class VI-like SAM-binding methyltransferase superfamily. Isoprenylcysteine carboxyl methyltransferase family.

It localises to the endoplasmic reticulum membrane. The catalysed reaction is [protein]-C-terminal S-[(2E,6E)-farnesyl]-L-cysteine + S-adenosyl-L-methionine = [protein]-C-terminal S-[(2E,6E)-farnesyl]-L-cysteine methyl ester + S-adenosyl-L-homocysteine. Functionally, mediates C-terminal methylation of the isoprenylated C-terminal cysteine in A-factor mating pheromone and Ras proteins. Does not have a preference for the farnesyl or geranylgeranyl moieties in the model substrates N-acetyl-S-farnesyl-L-cysteine (AFC) and N-acetyl-S-geranylgeranyl-L-cysteine (AGGC) in vitro. The polypeptide is Protein-S-isoprenylcysteine O-methyltransferase (STE14) (Saccharomyces cerevisiae (strain ATCC 204508 / S288c) (Baker's yeast)).